A 476-amino-acid chain; its full sequence is Glutamyl-tRNA(Gln) amidotransferase subunit A (476 aa).

Residues Lys-70 and Ser-145 each act as charge relay system in the active site. Ser-169 serves as the catalytic Acyl-ester intermediate.

The protein belongs to the amidase family. GatA subfamily. Heterotrimer of A, B and C subunits.

It carries out the reaction L-glutamyl-tRNA(Gln) + L-glutamine + ATP + H2O = L-glutaminyl-tRNA(Gln) + L-glutamate + ADP + phosphate + H(+). In terms of biological role, allows the formation of correctly charged Gln-tRNA(Gln) through the transamidation of misacylated Glu-tRNA(Gln) in organisms which lack glutaminyl-tRNA synthetase. The reaction takes place in the presence of glutamine and ATP through an activated gamma-phospho-Glu-tRNA(Gln). In Methanosarcina mazei (strain ATCC BAA-159 / DSM 3647 / Goe1 / Go1 / JCM 11833 / OCM 88) (Methanosarcina frisia), this protein is Glutamyl-tRNA(Gln) amidotransferase subunit A.